Consider the following 279-residue polypeptide: Tryptophan 2,3-dioxygenase (279 aa).

Substrate is bound by residues 48 to 52 (FIVIH), tyrosine 110, and arginine 114. A heme-binding site is contributed by histidine 237. Threonine 251 serves as a coordination point for substrate.

This sequence belongs to the tryptophan 2,3-dioxygenase family. In terms of assembly, homotetramer. Heme is required as a cofactor.

It carries out the reaction L-tryptophan + O2 = N-formyl-L-kynurenine. The protein operates within amino-acid degradation; L-tryptophan degradation via kynurenine pathway; L-kynurenine from L-tryptophan: step 1/2. In terms of biological role, heme-dependent dioxygenase that catalyzes the oxidative cleavage of the L-tryptophan (L-Trp) pyrrole ring and converts L-tryptophan to N-formyl-L-kynurenine. Catalyzes the oxidative cleavage of the indole moiety. This Bacillus thuringiensis subsp. konkukian (strain 97-27) protein is Tryptophan 2,3-dioxygenase.